The following is a 711-amino-acid chain: Mitochondrial intermediate peptidase (711 aa).

The N-terminal 33 residues, Met-1–Asp-33, are a transit peptide targeting the mitochondrion. At Lys-124 the chain carries N6-acetyllysine. A Zn(2+)-binding site is contributed by His-493. Glu-494 is a catalytic residue. Zn(2+) contacts are provided by His-497 and His-500.

It belongs to the peptidase M3 family. As to quaternary structure, monomer. The cofactor is Zn(2+).

It localises to the mitochondrion matrix. It carries out the reaction Release of an N-terminal octapeptide as second stage of processing of some proteins imported into the mitochondrion.. Its activity is regulated as follows. Activity is divalent cation-dependent. It is stimulated by manganese, magnesium or calcium ions and reversibly inhibited by zinc, cobalt and iron. In terms of biological role, cleaves proteins, imported into the mitochondrion, to their mature size. This is Mitochondrial intermediate peptidase (Mipep) from Mus musculus (Mouse).